The following is a 961-amino-acid chain: IQ motif and SEC7 domain-containing protein 1 (961 aa).

Residues 21–113 (SGVEGEAPSS…SLSESYELSS (93 aa)) are disordered. Residues 29 to 38 (SSETGTSLDS) are compositionally biased toward polar residues. Serine 88, serine 104, and serine 106 each carry phosphoserine. Residues 133–162 (TRHAARTIQTAFRQYQMNKNFERLRSSMSE) enclose the IQ domain. A phosphoserine mark is found at serine 179, serine 247, and serine 251. Disordered regions lie at residues 263–291 (SEEV…HRKL), 310–332 (LSPP…DLRL), and 347–515 (KEDK…DSPA). A compositionally biased stretch (basic and acidic residues) spans 272-291 (ARARDTEPKPGLHGMDHRKL). Basic and acidic residues-rich tracts occupy residues 364 to 374 (ERPEPRLRVEH) and 428 to 444 (LPRE…RPLE). A compositionally biased stretch (low complexity) spans 469-487 (DSINSTSNSNDTINCSSES). Phosphoserine is present on residues serine 510 and serine 513. Positions 515–708 (AFSNDVIRKR…IGIYERIRKR (194 aa)) constitute an SEC7 domain. Residues 772 to 864 (HQREIFLFND…LRESVAEVQE (93 aa)) enclose the PH domain. Residues 846–877 (QDRKKFTDDLRESVAEVQEMEKHRIESELEKQ) are a coiled coil. Position 890 is a phosphoserine (serine 890). Residue tyrosine 909 is modified to Phosphotyrosine. A disordered region spans residues 920-961 (LSSSLRDLSEAGKRGRRSSAGSLESNVEFQPFQPPQPPVLCS). 2 positions are modified to phosphoserine: serine 922 and serine 923. The segment covering 938–947 (SAGSLESNVE) has biased composition (polar residues). The span at 951 to 961 (FQPPQPPVLCS) shows a compositional bias: pro residues.

This sequence belongs to the BRAG family. Interacts with ARF1 and ARF6. Interacts with GRIA2; the interaction is required for ARF6 activation. As to expression, expressed in hippocampus.

The protein localises to the cytoplasm. It localises to the nucleus. The protein resides in the postsynaptic density. It is found in the cytoplasmic vesicle. Its subcellular location is the secretory vesicle. The protein localises to the synaptic vesicle. Functionally, guanine nucleotide exchange factor for ARF1 and ARF6. Guanine nucleotide exchange factor activity is enhanced by lipid binding. Accelerates GTP binding by ARFs of all three classes. Guanine nucleotide exchange protein for ARF6, mediating internalization of beta-1 integrin. Involved in neuronal development. In neurons, plays a role in the control of vesicle formation by endocytoc cargo. Upon long term depression, interacts with GRIA2 and mediates the activation of ARF6 to internalize synaptic AMPAR receptors. This Mus musculus (Mouse) protein is IQ motif and SEC7 domain-containing protein 1 (Iqsec1).